The following is a 224-amino-acid chain: Germin-like protein 8-8 (224 aa).

Positions 1–22 are cleaved as a signal peptide; that stretch reads MASPSFCLLAALLALVSWQAIA. Cys32 and Cys47 are disulfide-bonded. The Cupin type-1 domain occupies 62 to 212; the sequence is AMLDTPRKTN…AFQVEKGTID (151 aa). A glycan (N-linked (GlcNAc...) asparagine) is linked at Asn76. Mn(2+) contacts are provided by His109, His111, and Glu116. N-linked (GlcNAc...) asparagine glycosylation occurs at Asn135. Residue His157 coordinates Mn(2+).

It belongs to the germin family. In terms of assembly, oligomer (believed to be a pentamer but probably hexamer).

The protein localises to the secreted. Its subcellular location is the extracellular space. It is found in the apoplast. Plays a role in broad-spectrum disease resistance. Probably has no oxalate oxidase activity even if the active site is conserved. In Oryza sativa subsp. japonica (Rice), this protein is Germin-like protein 8-8.